A 114-amino-acid chain; its full sequence is Protein ORF3 (114 aa).

2 hydrophobic regions span residues 6 to 22 (CDLGLFCCCSSCFCLCC) and 33 to 53 (AVVGGAAAVPAVVSGVTGLIL). Residues 28 to 68 (VSRLAAVVGGAAAVPAVVSGVTGLILSPSQSPIFIQPTPSP) are interaction with host HPX. The interval 48 to 72 (VTGLILSPSQSPIFIQPTPSPPMSP) is interaction with the capsid protein. Ser-71 carries the post-translational modification Phosphoserine; by host. The tract at residues 72–114 (PLRPGLDLVFANQPDHSAPLGVTRPSAPPLPHVVDLPQLGPRR) is homodimerization, and interaction with host AMBP/bikunin. Residues 91–114 (LGVTRPSAPPLPHVVDLPQLGPRR) are disordered. An interaction with host SRC, HCK, FYN, PIK3R3 and GRB2 region spans residues 95 to 104 (RPSAPPLPHV). The PTAP/PSAP motif motif lies at 96–99 (PSAP).

This sequence belongs to the hepevirus ORF3 protein family. In terms of assembly, forms homooligomers. Interacts with host SRC, HCK, FYN, PIK3R3 and GRB2 (via SH3 domain); binding does not activate the kinases. Interacts with host AMBP/bikunin and AMBP/alpha-1-microglobulin peptides. Interacts with host HPX/hemopexin. Interacts (when phosphorylated) with capsid protein ORF2. Interacts with host TSG101; this interaction plays a role in viral release from the host cell. Interacts with host SIRPA; this interaction down-regulates the phosphorylation of host IRF3. In terms of processing, palmitoylated in the N-terminus.

The protein resides in the host endoplasmic reticulum membrane. The protein localises to the host cytoplasm. It is found in the host cytoskeleton. Its subcellular location is the virion. It localises to the host cell membrane. Small multifunctional phosphoprotein involved in virion morphogenesis, egress and counteracting host innate immunity. Plays critical roles in the final steps of viral release by interacting with host TSG101, a member of the vacuolar protein-sorting pathway and using other cellular host proteins involved in vesicle formation pathway. Also acts as a viroporin and forms ion conductive pores allowing viral particle release. Impairs the generation of type I interferon by down-regulating host TLR3 and TLR7 as well as their downstream signaling pathways. Down-regulates the phosphorylation of host IRF3 via the interaction with host SIRP-alpha, thereby inhibiting IFN-I expression. Interacts with host microtubules. The sequence is that of Protein ORF3 from Homo sapiens (Human).